The sequence spans 795 residues: Protocadherin beta-4 (795 aa).

The N-terminal stretch at 1–27 (MKKLGRIHPNRQVLAFILMVFLSQVRL) is a signal peptide. Residues 28-689 (EPIRYSVLEE…SQADSLTVYL (662 aa)) lie on the Extracellular side of the membrane. Cadherin domains are found at residues 34–132 (VLEE…SPVF), 137–241 (VLLK…APEF), 246–346 (YGVQ…PPEL), 351–450 (LTSS…APAF), and 455–560 (YTLF…SPFV). N-linked (GlcNAc...) asparagine glycosylation occurs at Asn-183. A glycan (N-linked (GlcNAc...) asparagine) is linked at Asn-417. Asn-566 carries N-linked (GlcNAc...) asparagine glycosylation. The region spanning 567-670 (GSAPCTELVP…LVDGFSQPYL (104 aa)) is the Cadherin 6 domain. The helical transmembrane segment at 690-710 (VVALASVSSLFLFSVLLFVAV) threads the bilayer. Topologically, residues 711-795 (RLCRRSRAAS…PKFRNSLVFS (85 aa)) are cytoplasmic.

The protein resides in the cell membrane. Functionally, potential calcium-dependent cell-adhesion protein. May be involved in the establishment and maintenance of specific neuronal connections in the brain. The chain is Protocadherin beta-4 (PCDHB4) from Pan troglodytes (Chimpanzee).